The following is a 240-amino-acid chain: Transposase for insertion sequence element IS3411 (240 aa).

Residues Val125–Arg240 form the Integrase catalytic domain.

Involved in the transposition of the insertion sequence. The polypeptide is Transposase for insertion sequence element IS3411 (Escherichia coli).